The primary structure comprises 185 residues: Glycerol-3-phosphate acyltransferase 4 (185 aa).

The next 6 helical transmembrane spans lie at 1-21 (MPLL…AYLA), 47-67 (LGRG…SLAI), 69-89 (LALA…AAVL), 113-133 (LLIA…VLLF), 137-157 (VIAA…LYGL), and 158-178 (PGGV…THFI).

This sequence belongs to the PlsY family. In terms of assembly, probably interacts with PlsX.

The protein resides in the cell membrane. The enzyme catalyses an acyl phosphate + sn-glycerol 3-phosphate = a 1-acyl-sn-glycero-3-phosphate + phosphate. The protein operates within lipid metabolism; phospholipid metabolism. In terms of biological role, catalyzes the transfer of an acyl group from acyl-phosphate (acyl-PO(4)) to glycerol-3-phosphate (G3P) to form lysophosphatidic acid (LPA). This enzyme utilizes acyl-phosphate as fatty acyl donor, but not acyl-CoA or acyl-ACP. This Dehalococcoides mccartyi (strain ATCC BAA-2266 / KCTC 15142 / 195) (Dehalococcoides ethenogenes (strain 195)) protein is Glycerol-3-phosphate acyltransferase 4.